We begin with the raw amino-acid sequence, 247 residues long: V-type proton ATPase subunit D (247 aa).

This sequence belongs to the V-ATPase D subunit family. As to quaternary structure, V-ATPase is a heteromultimeric enzyme made up of two complexes: the ATP-hydrolytic V1 complex and the proton translocation V0 complex. The V1 complex consists of three catalytic AB heterodimers that form a heterohexamer, three peripheral stalks each consisting of EG heterodimers, one central rotor including subunits D and F, and the regulatory subunits C and H. The proton translocation complex V0 consists of the proton transport subunit a, a ring of proteolipid subunits c9c'', rotary subunit d, subunits e and f, and the accessory subunits ATP6AP1/Ac45 and ATP6AP2/PRR. Interacts with SNX10.

The protein resides in the membrane. The protein localises to the cytoplasmic vesicle. It localises to the clathrin-coated vesicle membrane. It is found in the cytoplasm. Its subcellular location is the cytoskeleton. The protein resides in the microtubule organizing center. The protein localises to the centrosome. It localises to the cell projection. It is found in the cilium. Functionally, subunit of the V1 complex of vacuolar(H+)-ATPase (V-ATPase), a multisubunit enzyme composed of a peripheral complex (V1) that hydrolyzes ATP and a membrane integral complex (V0) that translocates protons. V-ATPase is responsible for acidifying and maintaining the pH of intracellular compartments and in some cell types, is targeted to the plasma membrane, where it is responsible for acidifying the extracellular environment. May play a role in cilium biogenesis through regulation of the transport and the localization of proteins to the cilium. The sequence is that of V-type proton ATPase subunit D (ATP6V1D) from Oryctolagus cuniculus (Rabbit).